We begin with the raw amino-acid sequence, 824 residues long: Serine/threonine-protein kinase SCH9 (824 aa).

The segment covering 1–23 has biased composition (polar residues); sequence MMNFFTSKSSNQDTGFSSQHQHP. Disordered regions lie at residues 1–37, 125–152, 221–272, and 285–327; these read MMNF…STAG, NAGN…SSTT, ESLG…SQLP, and THRS…SHPI. The span at 24–37 shows a compositional bias: low complexity; that stretch reads NGQNNGNNNSSTAG. In terms of domain architecture, C2 spans 166–378; it reads QREAAAAAYG…LAHASQHQWH (213 aa). The span at 226–248 shows a compositional bias: low complexity; that stretch reads INNNNNNNNNNQHNQNQHINNNN. Composition is skewed to polar residues over residues 249–272 and 286–302; these read ENTN…SQLP and HRSS…SSVT. A compositionally biased stretch (low complexity) spans 307–321; sequence RSSNSSSGSSNGPKN. The region spanning 412-671 is the Protein kinase domain; it reads FEVLRLLGKG…GRELRAHPFF (260 aa). Residues 418 to 426 and Lys441 each bind ATP; that span reads LGKGTFGQV. The active-site Proton acceptor is Asp538. The residue at position 570 (Thr570) is a Phosphothreonine; by PKH1 or PKH2. The region spanning 672 to 748 is the AGC-kinase C-terminal domain; it reads ADIDWEALKQ…VDESAIDEHV (77 aa). Ser711 carries the phosphoserine; by TORC1 modification. Thr723 carries the post-translational modification Phosphothreonine; by TORC1. The residue at position 726 (Ser726) is a Phosphoserine; by TORC1. The residue at position 737 (Thr737) is a Phosphothreonine; by TORC1. Ser758 and Ser765 each carry phosphoserine; by TORC1.

This sequence belongs to the protein kinase superfamily. AGC Ser/Thr protein kinase family. cAMP subfamily. Post-translationally, phosphorylated by TORC1 in nutrient-replete conditions and during mechanical stress.

It catalyses the reaction L-seryl-[protein] + ATP = O-phospho-L-seryl-[protein] + ADP + H(+). It carries out the reaction L-threonyl-[protein] + ATP = O-phospho-L-threonyl-[protein] + ADP + H(+). Its activity is regulated as follows. Activated by cAMP. Its function is as follows. Protein kinase that is part of growth control pathway which is at least partially redundant with the cAMP pathway. Regulates both BCY1 phosphorylation and MPK1 activity. Regulates ribosome biogenesis, translation initiation, and entry into stationary phase in a TORC1-dependent manner. The sequence is that of Serine/threonine-protein kinase SCH9 (SCH9) from Saccharomyces cerevisiae (strain ATCC 204508 / S288c) (Baker's yeast).